We begin with the raw amino-acid sequence, 117 residues long: Minor capsid protein VP2 (117 aa).

This sequence belongs to the lagovirus VP2 protein family. As to quaternary structure, homooligomer. The portal-like structure consists in 12 copies of VP2. Interacts with capsid protein VP1.

The protein resides in the virion. It localises to the host cytoplasm. Minor structural protein that forms a portal-like structure at a unique three-fold axis of symmetry, following binding to the host receptor. The channel formed by VP2 may allow the delivery of the viral genome through the host endosomal membrane. This chain is Minor capsid protein VP2, found in Oryctolagus cuniculus (Rabbit).